The chain runs to 264 residues: ATP synthase subunit a (264 aa).

6 helical membrane-spanning segments follow: residues 29-49, 87-107, 134-154, 177-197, 208-228, and 235-255; these read TWHIDSLLFSVGLGVLFLWIF, NALIAPLALTIFVWVFMMNFM, DLNITFSLALGVFLLIIYYSI, IPVNLLLESVTLIAKPISLAL, LIFILIALMYGANWLIASLGV, and LIFHILVITLQAFIFMMLTIV.

It belongs to the ATPase A chain family. As to quaternary structure, F-type ATPases have 2 components, CF(1) - the catalytic core - and CF(0) - the membrane proton channel. CF(1) has five subunits: alpha(3), beta(3), gamma(1), delta(1), epsilon(1). CF(0) has three main subunits: a(1), b(2) and c(9-12). The alpha and beta chains form an alternating ring which encloses part of the gamma chain. CF(1) is attached to CF(0) by a central stalk formed by the gamma and epsilon chains, while a peripheral stalk is formed by the delta and b chains.

The protein resides in the cell inner membrane. In terms of biological role, key component of the proton channel; it plays a direct role in the translocation of protons across the membrane. This chain is ATP synthase subunit a, found in Shewanella amazonensis (strain ATCC BAA-1098 / SB2B).